Consider the following 585-residue polypeptide: Proline--tRNA ligase (585 aa).

The protein belongs to the class-II aminoacyl-tRNA synthetase family. ProS type 1 subfamily. In terms of assembly, homodimer.

The protein localises to the cytoplasm. The enzyme catalyses tRNA(Pro) + L-proline + ATP = L-prolyl-tRNA(Pro) + AMP + diphosphate. Its function is as follows. Catalyzes the attachment of proline to tRNA(Pro) in a two-step reaction: proline is first activated by ATP to form Pro-AMP and then transferred to the acceptor end of tRNA(Pro). As ProRS can inadvertently accommodate and process non-cognate amino acids such as alanine and cysteine, to avoid such errors it has two additional distinct editing activities against alanine. One activity is designated as 'pretransfer' editing and involves the tRNA(Pro)-independent hydrolysis of activated Ala-AMP. The other activity is designated 'posttransfer' editing and involves deacylation of mischarged Ala-tRNA(Pro). The misacylated Cys-tRNA(Pro) is not edited by ProRS. This chain is Proline--tRNA ligase, found in Corynebacterium diphtheriae (strain ATCC 700971 / NCTC 13129 / Biotype gravis).